The sequence spans 358 residues: Peptide chain release factor 1 (358 aa).

At Gln233 the chain carries N5-methylglutamine. Positions 282 to 306 (QRAASERSADRRGQVGSGDRSERVR) are enriched in basic and acidic residues. The disordered stretch occupies residues 282 to 308 (QRAASERSADRRGQVGSGDRSERVRTY).

This sequence belongs to the prokaryotic/mitochondrial release factor family. Post-translationally, methylated by PrmC. Methylation increases the termination efficiency of RF1.

It is found in the cytoplasm. In terms of biological role, peptide chain release factor 1 directs the termination of translation in response to the peptide chain termination codons UAG and UAA. In Afipia carboxidovorans (strain ATCC 49405 / DSM 1227 / KCTC 32145 / OM5) (Oligotropha carboxidovorans), this protein is Peptide chain release factor 1.